The following is a 359-amino-acid chain: Peptide chain release factor 1 (359 aa).

Residue Q236 is modified to N5-methylglutamine.

It belongs to the prokaryotic/mitochondrial release factor family. Methylated by PrmC. Methylation increases the termination efficiency of RF1.

It localises to the cytoplasm. Peptide chain release factor 1 directs the termination of translation in response to the peptide chain termination codons UAG and UAA. The polypeptide is Peptide chain release factor 1 (Streptococcus pneumoniae (strain Taiwan19F-14)).